Here is a 255-residue protein sequence, read N- to C-terminus: GTP cyclohydrolase FolE2 (255 aa).

This sequence belongs to the GTP cyclohydrolase IV family.

It carries out the reaction GTP + H2O = 7,8-dihydroneopterin 3'-triphosphate + formate + H(+). The protein operates within cofactor biosynthesis; 7,8-dihydroneopterin triphosphate biosynthesis; 7,8-dihydroneopterin triphosphate from GTP: step 1/1. Its function is as follows. Converts GTP to 7,8-dihydroneopterin triphosphate. The protein is GTP cyclohydrolase FolE2 of Syntrophus aciditrophicus (strain SB).